The primary structure comprises 250 residues: Ditrans,polycis-undecaprenyl-diphosphate synthase ((2E,6E)-farnesyl-diphosphate specific) (250 aa).

D20 is a catalytic residue. Position 20 (D20) interacts with Mg(2+). Substrate-binding positions include 21 to 24 (GNGR), W25, R33, H37, and 65 to 67 (SSE). The active-site Proton acceptor is the N68. Substrate-binding positions include W69, R71, R188, and 194-196 (RIS). E207 is a Mg(2+) binding site.

The protein belongs to the UPP synthase family. Homodimer. Mg(2+) is required as a cofactor.

It catalyses the reaction 8 isopentenyl diphosphate + (2E,6E)-farnesyl diphosphate = di-trans,octa-cis-undecaprenyl diphosphate + 8 diphosphate. In terms of biological role, catalyzes the sequential condensation of isopentenyl diphosphate (IPP) with (2E,6E)-farnesyl diphosphate (E,E-FPP) to yield (2Z,6Z,10Z,14Z,18Z,22Z,26Z,30Z,34E,38E)-undecaprenyl diphosphate (di-trans,octa-cis-UPP). UPP is the precursor of glycosyl carrier lipid in the biosynthesis of bacterial cell wall polysaccharide components such as peptidoglycan and lipopolysaccharide. The protein is Ditrans,polycis-undecaprenyl-diphosphate synthase ((2E,6E)-farnesyl-diphosphate specific) of Vibrio cholerae serotype O1 (strain ATCC 39315 / El Tor Inaba N16961).